The primary structure comprises 940 residues: UvrABC system protein A (940 aa).

An ATP-binding site is contributed by glycine 31–serine 38. Residues cysteine 253 to cysteine 280 form a C4-type zinc finger. ABC transporter domains follow at residues tryptophan 310–leucine 587 and alanine 607–lysine 937. Glycine 640–serine 647 is an ATP binding site. The C4-type zinc finger occupies cysteine 740 to cysteine 766.

This sequence belongs to the ABC transporter superfamily. UvrA family. Forms a heterotetramer with UvrB during the search for lesions.

Its subcellular location is the cytoplasm. The UvrABC repair system catalyzes the recognition and processing of DNA lesions. UvrA is an ATPase and a DNA-binding protein. A damage recognition complex composed of 2 UvrA and 2 UvrB subunits scans DNA for abnormalities. When the presence of a lesion has been verified by UvrB, the UvrA molecules dissociate. In Escherichia coli O6:H1 (strain CFT073 / ATCC 700928 / UPEC), this protein is UvrABC system protein A.